The chain runs to 381 residues: Ecotin-like protein 3 (381 aa).

The segment at 232 to 381 (EHLEVCPKNN…GSKADPVDGK (150 aa)) is disordered. The segment covering 273–292 (NESSPSRPRLSSTAYWPQEN) has biased composition (polar residues). The segment covering 336–347 (RKAEDDVYEKTM) has biased composition (basic and acidic residues). Residues 363-372 (SASSTKSGNG) are compositionally biased toward polar residues.

It belongs to the protease inhibitor I11 (ecotin) family.

The chain is Ecotin-like protein 3 from Leishmania major.